Here is a 751-residue protein sequence, read N- to C-terminus: Conserved oligomeric Golgi complex subunit 5 (751 aa).

Disordered stretches follow at residues 1-21 (MVTG…DDND) and 244-263 (SPTH…KTPQ).

This sequence belongs to the COG5 family. In terms of assembly, component of the conserved oligomeric Golgi complex which is composed of eight different subunits and is required for normal Golgi morphology and localization.

It is found in the golgi apparatus membrane. Its function is as follows. Required for normal Golgi function and necessary during spermatogenesis. Required for cleavage furrow ingression during cytokinesis in dividing spermatocytes and for the extensive polarized cell growth that accompanies spermatid elongation. The protein is Conserved oligomeric Golgi complex subunit 5 (fws) of Drosophila melanogaster (Fruit fly).